A 356-amino-acid chain; its full sequence is tRNA pseudouridine synthase D (356 aa).

The Nucleophile role is filled by Asp-84. Residues 159-302 (GVPNYYGPQR…RRGARRPIRV (144 aa)) form the TRUD domain.

It belongs to the pseudouridine synthase TruD family.

It carries out the reaction uridine(13) in tRNA = pseudouridine(13) in tRNA. Responsible for synthesis of pseudouridine from uracil-13 in transfer RNAs. In Thermus thermophilus (strain ATCC BAA-163 / DSM 7039 / HB27), this protein is tRNA pseudouridine synthase D.